We begin with the raw amino-acid sequence, 1249 residues long: Pleckstrin homology-like domain family B member 2 (1249 aa).

2 disordered regions span residues 64 to 85 (QPVSAKRSPSPMGTSVRSSPSL) and 128 to 154 (DHYTGRDSERSTRLSEKPPYSRYSSRN). Phosphoserine is present on residues Ser-71 and Ser-73. The segment covering 74–84 (PMGTSVRSSPS) has biased composition (polar residues). Over residues 128–143 (DHYTGRDSERSTRLSE) the composition is skewed to basic and acidic residues. A phosphoserine mark is found at Ser-156, Ser-203, Ser-241, and Ser-244. Disordered regions lie at residues 190 to 248 (SPIS…LSNM) and 264 to 289 (NQMSPLSLPPRSSLGNSRRGQLGEKD). Over residues 231 to 248 (ENVSVRTRKYSGSSLSNM) the composition is skewed to polar residues. The segment covering 267–283 (SPLSLPPRSSLGNSRRG) has biased composition (low complexity). 11 positions are modified to phosphoserine: Ser-329, Ser-333, Ser-347, Ser-380, Ser-383, Ser-389, Ser-411, Ser-416, Ser-465, Ser-486, and Ser-510. The interval 388 to 424 (DSDLESLRQSSETPQPVLRERKSSISSISGRDDLMDY) is disordered. Thr-546 and Thr-570 each carry phosphothreonine. Coiled coils occupy residues 580 to 692 (TQEL…LDNC) and 718 to 803 (FEDL…LCNL). The tract at residues 866–934 (VSQPQSSEHF…LGQSNSCGSV (69 aa)) is disordered. A compositionally biased stretch (basic and acidic residues) spans 873-888 (EHFRSLEERKKQHKEG). Thr-894 carries the phosphothreonine modification. The span at 901 to 919 (TPSLSPHFSSATMGRSTTP) shows a compositional bias: polar residues. Residues 1028–1094 (IARIEEMERL…QKLIEKEVKI (67 aa)) are a coiled coil. Positions 1139-1242 (EKTCRGYLIK…WMDVIVTGAE (104 aa)) constitute a PH domain.

Interacts with FLNC. Interacts with AMOTL2; interaction may facilitate PHLDB2 localization to the myotube podosome cortex that surrounds the core. Part of a cortical microtubule stabilization complex (CMSC) composed of KANK1, PPFIA1, PPFIBP1, ERC1/ELKS, PHLDB2/LL5beta, CLASPs, KIF21A and possibly additional interactors; within CMSCs KANK1 and PHLDB2/LL5beta appear to be the core components for targeting of microtubule-binding proteins KIF21A and CLASPs, whereas PPFIA1, PPFIBP1 and ERC1/ELKS serve as scaffolds for protein clustering. In terms of tissue distribution, expressed at postsynaptic membranes of skeletal neuromuscular junctions (at protein level).

Its subcellular location is the cytoplasm. It localises to the membrane. The protein resides in the cell projection. It is found in the podosome. The protein localises to the cell cortex. Seems to be involved in the assembly of the postsynaptic apparatus. May play a role in acetyl-choline receptor (AChR) aggregation in the postsynaptic membrane. The sequence is that of Pleckstrin homology-like domain family B member 2 (Phldb2) from Mus musculus (Mouse).